Consider the following 112-residue polypeptide: Nitrogen regulatory protein P-II (112 aa).

Tyrosine 51 carries the post-translational modification O-UMP-tyrosine.

It belongs to the P(II) protein family. Homotrimer.

Functionally, in nitrogen-limiting conditions, when the ratio of Gln to 2-ketoglutarate decreases, P-II is uridylylated to P-II-UMP. P-II-UMP allows the deadenylation of glutamine synthetase (GS), thus activating the enzyme. Conversely, in nitrogen excess P-II is deuridylated and promotes the adenylation of GS. P-II indirectly controls the transcription of the GS gene (glnA). P-II prevents NR-II-catalyzed conversion of NR-I to NR-I-phosphate, the transcriptional activator of glnA. When P-II is uridylylated to P-II-UMP, these events are reversed. This is Nitrogen regulatory protein P-II (glnB) from Bradyrhizobium diazoefficiens (strain JCM 10833 / BCRC 13528 / IAM 13628 / NBRC 14792 / USDA 110).